Here is a 351-residue protein sequence, read N- to C-terminus: Nicotinate-nucleotide--dimethylbenzimidazole phosphoribosyltransferase (351 aa).

The active-site Proton acceptor is the Glu318.

The protein belongs to the CobT family.

It carries out the reaction 5,6-dimethylbenzimidazole + nicotinate beta-D-ribonucleotide = alpha-ribazole 5'-phosphate + nicotinate + H(+). It functions in the pathway nucleoside biosynthesis; alpha-ribazole biosynthesis; alpha-ribazole from 5,6-dimethylbenzimidazole: step 1/2. Functionally, catalyzes the synthesis of alpha-ribazole-5'-phosphate from nicotinate mononucleotide (NAMN) and 5,6-dimethylbenzimidazole (DMB). This Chloroflexus aurantiacus (strain ATCC 29366 / DSM 635 / J-10-fl) protein is Nicotinate-nucleotide--dimethylbenzimidazole phosphoribosyltransferase.